Consider the following 426-residue polypeptide: Enolase (426 aa).

Residue Q163 coordinates (2R)-2-phosphoglycerate. E205 acts as the Proton donor in catalysis. D242, E283, and D310 together coordinate Mg(2+). The (2R)-2-phosphoglycerate site is built by K335, R364, S365, and K386. K335 functions as the Proton acceptor in the catalytic mechanism.

Belongs to the enolase family. The cofactor is Mg(2+).

Its subcellular location is the cytoplasm. The protein resides in the secreted. It is found in the cell surface. It carries out the reaction (2R)-2-phosphoglycerate = phosphoenolpyruvate + H2O. The protein operates within carbohydrate degradation; glycolysis; pyruvate from D-glyceraldehyde 3-phosphate: step 4/5. Functionally, catalyzes the reversible conversion of 2-phosphoglycerate (2-PG) into phosphoenolpyruvate (PEP). It is essential for the degradation of carbohydrates via glycolysis. The sequence is that of Enolase from Beutenbergia cavernae (strain ATCC BAA-8 / DSM 12333 / CCUG 43141 / JCM 11478 / NBRC 16432 / NCIMB 13614 / HKI 0122).